The sequence spans 332 residues: Phosphatidylglycerol--prolipoprotein diacylglyceryl transferase (332 aa).

The next 3 helical transmembrane spans lie at F18–L38, F66–Y86, and V111–L131. R159 contacts a 1,2-diacyl-sn-glycero-3-phospho-(1'-sn-glycerol). A run of 2 helical transmembrane segments spans residues G249 to F269 and I302 to H322.

Belongs to the Lgt family.

It localises to the cell inner membrane. The catalysed reaction is L-cysteinyl-[prolipoprotein] + a 1,2-diacyl-sn-glycero-3-phospho-(1'-sn-glycerol) = an S-1,2-diacyl-sn-glyceryl-L-cysteinyl-[prolipoprotein] + sn-glycerol 1-phosphate + H(+). It participates in protein modification; lipoprotein biosynthesis (diacylglyceryl transfer). Its function is as follows. Catalyzes the transfer of the diacylglyceryl group from phosphatidylglycerol to the sulfhydryl group of the N-terminal cysteine of a prolipoprotein, the first step in the formation of mature lipoproteins. The polypeptide is Phosphatidylglycerol--prolipoprotein diacylglyceryl transferase (Treponema pallidum (strain Nichols)).